The following is a 449-amino-acid chain: NADH-quinone oxidoreductase subunit H (449 aa).

9 helical membrane passes run 29-49 (ILLK…FAIV), 96-116 (PIFI…FAVI), 136-156 (LPVS…GLIL), 177-197 (IISY…YAGT), 211-231 (WYIV…GETN), 259-279 (FFFL…TTLF), 298-318 (WVPL…FIWL), 330-350 (FMSF…LAVA), and 365-385 (WLVG…IDPG). Positions 393–402 (LEEAEQRKLA) are enriched in basic and acidic residues. The interval 393–449 (LEEAEQRKLAEAPSLDRIPWPPPPQAAGRGRPAVSAGASANGSSTVIPADPGPRQER) is disordered. Residues 418–436 (AAGRGRPAVSAGASANGSS) show a composition bias toward low complexity.

Belongs to the complex I subunit 1 family. In terms of assembly, NDH-1 is composed of 14 different subunits. Subunits NuoA, H, J, K, L, M, N constitute the membrane sector of the complex.

It localises to the cell membrane. It carries out the reaction a quinone + NADH + 5 H(+)(in) = a quinol + NAD(+) + 4 H(+)(out). NDH-1 shuttles electrons from NADH, via FMN and iron-sulfur (Fe-S) centers, to quinones in the respiratory chain. The immediate electron acceptor for the enzyme in this species is believed to be ubiquinone. Couples the redox reaction to proton translocation (for every two electrons transferred, four hydrogen ions are translocated across the cytoplasmic membrane), and thus conserves the redox energy in a proton gradient. This subunit may bind ubiquinone. The protein is NADH-quinone oxidoreductase subunit H of Frankia casuarinae (strain DSM 45818 / CECT 9043 / HFP020203 / CcI3).